We begin with the raw amino-acid sequence, 150 residues long: Large ribosomal subunit protein bL9 (150 aa).

The protein belongs to the bacterial ribosomal protein bL9 family.

Binds to the 23S rRNA. This Mycoplasma genitalium (strain ATCC 33530 / DSM 19775 / NCTC 10195 / G37) (Mycoplasmoides genitalium) protein is Large ribosomal subunit protein bL9.